A 341-amino-acid chain; its full sequence is Short chain dehydrogenase FGM9 (341 aa).

4 residues coordinate NADP(+): Leu38, Lys63, Asp88, and Asn114. Active-site proton donor residues include Ser167 and Tyr200. Residues Tyr200 and Lys204 each coordinate NADP(+). Catalysis depends on Lys204, which acts as the Lowers pKa of active site Tyr.

The protein belongs to the short-chain dehydrogenases/reductases (SDR) family.

The protein operates within secondary metabolite biosynthesis. Functionally, short chain dehydrogenase; part of the Fg3_54/C64 gene cluster that mediates the biosynthesis of the octapeptide fusaoctaxin A, a virulence factor that is required for cell-to-cell invasiveness of plant host. The 2 nonribosomal peptide synthetases NRPS9 and NRPS5 form an assembly line which likely utilizes GABA as a starter unit (loaded on the unique module M1 of NRPS9) and sequentially incorporates seven extender units composed of the residues L-Ala, L-allo-Ile, L-Ser, L-Val, L-Ser, L-Leu and L-Leu, respectively. During the process, each of the residues that are tethered on modules M3-M7 of NRPS5 containing an E domain can undergo an epimerization reaction to produce a D-configuration before the transpeptidation reaction occurs. The elongation of the peptidyl chain might be terminated by module M8-mediated L-Leu incorporation, followed by R domain-catalyzed 4 electron reduction to release the resulting octapeptide from the assembly line as an alcohol. Fusaoctaxin A is cleaved by the cluster specific ABC transporter FGM5 to the pentapeptide fusapentaxin A and the tripeptide fusatrixin A. The other enzymes from the cluster, FGM1, FGM2, FGM3 and FGM9 seem not to be involved in the biosynthesis of fusaoctaxin A and their functions have still to be determined. The sequence is that of Short chain dehydrogenase FGM9 from Gibberella zeae (strain ATCC MYA-4620 / CBS 123657 / FGSC 9075 / NRRL 31084 / PH-1) (Wheat head blight fungus).